The primary structure comprises 358 residues: Peptide chain release factor 1 (358 aa).

Gln-233 is subject to N5-methylglutamine.

This sequence belongs to the prokaryotic/mitochondrial release factor family. In terms of processing, methylated by PrmC. Methylation increases the termination efficiency of RF1.

It localises to the cytoplasm. Its function is as follows. Peptide chain release factor 1 directs the termination of translation in response to the peptide chain termination codons UAG and UAA. This is Peptide chain release factor 1 from Brevibacillus brevis (strain 47 / JCM 6285 / NBRC 100599).